Reading from the N-terminus, the 375-residue chain is Putative serine protease 47 (375 aa).

The first 23 residues, Met-1–Ala-23, serve as a signal peptide directing secretion. Residues Asp-41 to Thr-60 form a disordered region. Residues Arg-51–Thr-60 show a composition bias toward polar residues. Positions Ile-81–Arg-323 constitute a Peptidase S1 domain. A disulfide bridge links Cys-106 with Cys-122. Residues His-121 and Asp-172 each act as charge relay system in the active site. Residues Asn-183 and Asn-203 are each glycosylated (N-linked (GlcNAc...) asparagine). Cys-206 and Cys-281 are oxidised to a cystine. The Charge relay system role is filled by Ser-275.

It belongs to the peptidase S1 family.

It is found in the secreted. This Homo sapiens (Human) protein is Putative serine protease 47 (PRSS47P).